Here is a 466-residue protein sequence, read N- to C-terminus: Ribulose bisphosphate carboxylase large chain (466 aa).

Residue lysine 5 is modified to N6,N6,N6-trimethyllysine. Residues asparagine 114 and threonine 164 each contribute to the substrate site. Lysine 166 functions as the Proton acceptor in the catalytic mechanism. Substrate is bound at residue lysine 168. Residues lysine 192, aspartate 194, and glutamate 195 each contribute to the Mg(2+) site. Lysine 192 is subject to N6-carboxylysine. The active-site Proton acceptor is histidine 285. Residues arginine 286, histidine 318, and serine 370 each coordinate substrate.

The protein belongs to the RuBisCO large chain family. Type I subfamily. Heterohexadecamer of 8 large chains and 8 small chains. Mg(2+) is required as a cofactor.

The protein localises to the plastid. It localises to the chloroplast. It carries out the reaction 2 (2R)-3-phosphoglycerate + 2 H(+) = D-ribulose 1,5-bisphosphate + CO2 + H2O. The catalysed reaction is D-ribulose 1,5-bisphosphate + O2 = 2-phosphoglycolate + (2R)-3-phosphoglycerate + 2 H(+). Functionally, ruBisCO catalyzes two reactions: the carboxylation of D-ribulose 1,5-bisphosphate, the primary event in carbon dioxide fixation, as well as the oxidative fragmentation of the pentose substrate in the photorespiration process. Both reactions occur simultaneously and in competition at the same active site. The polypeptide is Ribulose bisphosphate carboxylase large chain (Drosera regia (King sundew)).